Here is a 379-residue protein sequence, read N- to C-terminus: Queuine tRNA-ribosyltransferase (379 aa).

Residue Asp-94 is the Proton acceptor of the active site. Residues Asp-94–Phe-98, Asp-148, Gln-191, and Gly-218 contribute to the substrate site. The RNA binding stretch occupies residues Gly-249–Ser-255. The active-site Nucleophile is the Asp-268. The interval Thr-273 to Arg-277 is RNA binding; important for wobble base 34 recognition. Positions 306, 308, 311, and 337 each coordinate Zn(2+).

Belongs to the queuine tRNA-ribosyltransferase family. Homodimer. Within each dimer, one monomer is responsible for RNA recognition and catalysis, while the other monomer binds to the replacement base PreQ1. Zn(2+) serves as cofactor.

It carries out the reaction 7-aminomethyl-7-carbaguanine + guanosine(34) in tRNA = 7-aminomethyl-7-carbaguanosine(34) in tRNA + guanine. It participates in tRNA modification; tRNA-queuosine biosynthesis. Catalyzes the base-exchange of a guanine (G) residue with the queuine precursor 7-aminomethyl-7-deazaguanine (PreQ1) at position 34 (anticodon wobble position) in tRNAs with GU(N) anticodons (tRNA-Asp, -Asn, -His and -Tyr). Catalysis occurs through a double-displacement mechanism. The nucleophile active site attacks the C1' of nucleotide 34 to detach the guanine base from the RNA, forming a covalent enzyme-RNA intermediate. The proton acceptor active site deprotonates the incoming PreQ1, allowing a nucleophilic attack on the C1' of the ribose to form the product. After dissociation, two additional enzymatic reactions on the tRNA convert PreQ1 to queuine (Q), resulting in the hypermodified nucleoside queuosine (7-(((4,5-cis-dihydroxy-2-cyclopenten-1-yl)amino)methyl)-7-deazaguanosine). This chain is Queuine tRNA-ribosyltransferase, found in Halalkalibacterium halodurans (strain ATCC BAA-125 / DSM 18197 / FERM 7344 / JCM 9153 / C-125) (Bacillus halodurans).